The sequence spans 208 residues: NAD(P)H-quinone oxidoreductase subunit I (208 aa).

4Fe-4S ferredoxin-type domains are found at residues 55–84 (GRIHYEFDKCIACEVCVRVCPINLPVVDWV) and 95–124 (RNYSIDFGVCIFCGNCVEYCPTNCLSMTEE). [4Fe-4S] cluster is bound by residues C64, C67, C70, C74, C104, C107, C110, and C114.

Belongs to the complex I 23 kDa subunit family. NDH-1 is composed of at least 11 different subunits. Requires [4Fe-4S] cluster as cofactor.

Its subcellular location is the cellular thylakoid membrane. It catalyses the reaction a plastoquinone + NADH + (n+1) H(+)(in) = a plastoquinol + NAD(+) + n H(+)(out). It carries out the reaction a plastoquinone + NADPH + (n+1) H(+)(in) = a plastoquinol + NADP(+) + n H(+)(out). Functionally, NDH-1 shuttles electrons from an unknown electron donor, via FMN and iron-sulfur (Fe-S) centers, to quinones in the respiratory and/or the photosynthetic chain. The immediate electron acceptor for the enzyme in this species is believed to be plastoquinone. Couples the redox reaction to proton translocation, and thus conserves the redox energy in a proton gradient. This chain is NAD(P)H-quinone oxidoreductase subunit I, found in Prochlorococcus marinus (strain AS9601).